Consider the following 339-residue polypeptide: UDP-glucose 4-epimerase (339 aa).

Residues 12–13, 32–37, 59–60, 81–85, asparagine 100, serine 125, tyrosine 150, lysine 154, and phenylalanine 179 each bind NAD(+); these read FI, DNLCNS, DI, and FAGLK. Serine 125 and tyrosine 150 together coordinate substrate. Residue tyrosine 150 is the Proton acceptor of the active site. Residues asparagine 180, 200–201, 217–219, arginine 232, and 293–296 each bind substrate; these read NL, AVF, and RAGD.

Belongs to the NAD(P)-dependent epimerase/dehydratase family. As to quaternary structure, homodimer. NAD(+) serves as cofactor.

It catalyses the reaction UDP-alpha-D-glucose = UDP-alpha-D-galactose. Its pathway is carbohydrate metabolism; galactose metabolism. Involved in the metabolism of galactose. Plays an essential role in the incorporation of galactose into meningococcal lipopolysaccharide surface molecules, which are important for pathogenesis. Catalyzes the conversion of UDP-galactose (UDP-Gal) to UDP-glucose (UDP-Glc) through a mechanism involving the transient reduction of NAD. This Neisseria meningitidis serogroup B (strain ATCC BAA-335 / MC58) protein is UDP-glucose 4-epimerase (galE).